The sequence spans 40 residues: Natriuretic peptide PtNP-a (40 aa).

Cysteine 9 and cysteine 25 are disulfide-bonded. A compositionally biased stretch (polar residues) spans 17–34 (ISNTSGMGCRNPIQNRPK). Positions 17–40 (ISNTSGMGCRNPIQNRPKSTPGGS) are disordered.

This sequence belongs to the natriuretic peptide family. As to expression, expressed by the venom gland.

Its subcellular location is the secreted. Functionally, snake venom natriuretic peptide that targets NPR1 and possibly NPR2. Exhibits hypotensive and vasodepressor activities. Recombinant PtNP-a demonstrates a dose-dependent stimulation of cGMP production via the natriuretic peptide receptor 1 (NPR1) (EC(50)=563 nM) in Madine Darby Canine Kidney (MDCK) cells. It also inhibits the angiotensin converting enzyme (ACE). The protein is Natriuretic peptide PtNP-a of Pseudonaja textilis (Eastern brown snake).